A 109-amino-acid chain; its full sequence is Nucleoid-associated protein BCE_0021 (109 aa).

This sequence belongs to the YbaB/EbfC family. Homodimer.

Its subcellular location is the cytoplasm. It localises to the nucleoid. Binds to DNA and alters its conformation. May be involved in regulation of gene expression, nucleoid organization and DNA protection. The protein is Nucleoid-associated protein BCE_0021 of Bacillus cereus (strain ATCC 10987 / NRS 248).